Here is a 333-residue protein sequence, read N- to C-terminus: L-lactate dehydrogenase A chain (333 aa).

NAD(+)-binding positions include 30 to 58 and R100; that span reads GAVG…IEDK. Residues R107, N139, and R170 each coordinate substrate. N139 lines the NAD(+) pocket. The active-site Proton acceptor is H194. Residue T249 participates in substrate binding.

The protein belongs to the LDH/MDH superfamily. LDH family. Homotetramer.

It is found in the cytoplasm. It catalyses the reaction (S)-lactate + NAD(+) = pyruvate + NADH + H(+). It functions in the pathway fermentation; pyruvate fermentation to lactate; (S)-lactate from pyruvate: step 1/1. Functionally, interconverts simultaneously and stereospecifically pyruvate and lactate with concomitant interconversion of NADH and NAD(+). The polypeptide is L-lactate dehydrogenase A chain (LDHA) (Ambystoma mexicanum (Axolotl)).